The chain runs to 242 residues: Segregation and condensation protein A (242 aa).

Belongs to the ScpA family. As to quaternary structure, component of a cohesin-like complex composed of ScpA, ScpB and the Smc homodimer, in which ScpA and ScpB bind to the head domain of Smc. The presence of the three proteins is required for the association of the complex with DNA.

Its subcellular location is the cytoplasm. Functionally, participates in chromosomal partition during cell division. May act via the formation of a condensin-like complex containing Smc and ScpB that pull DNA away from mid-cell into both cell halves. The chain is Segregation and condensation protein A from Streptococcus pneumoniae serotype 2 (strain D39 / NCTC 7466).